Consider the following 226-residue polypeptide: Ribonuclease T (226 aa).

The region spanning 20–194 (VVIDVETAGF…YDTERTAELF (175 aa)) is the Exonuclease domain. The Mg(2+) site is built by Asp-23, Glu-25, His-181, and Asp-186. His-181 (proton donor/acceptor) is an active-site residue.

The protein belongs to the RNase T family. As to quaternary structure, homodimer. Mg(2+) serves as cofactor.

Its function is as follows. Trims short 3' overhangs of a variety of RNA species, leaving a one or two nucleotide 3' overhang. Responsible for the end-turnover of tRNA: specifically removes the terminal AMP residue from uncharged tRNA (tRNA-C-C-A). Also appears to be involved in tRNA biosynthesis. The chain is Ribonuclease T from Shewanella denitrificans (strain OS217 / ATCC BAA-1090 / DSM 15013).